The sequence spans 403 residues: Serine/threonine transporter SstT (403 aa).

The next 8 helical transmembrane spans lie at 11-31, 51-71, 81-101, 138-158, 175-195, 213-233, 285-305, and 319-339; these read GNLV…AFIS, AIAP…KEVG, VMYV…SFIF, ALAN…GIPL, AVSY…FGLV, LLGV…PILV, VAIP…VTVL, and FMTA…ASGV.

The protein belongs to the dicarboxylate/amino acid:cation symporter (DAACS) (TC 2.A.23) family.

It is found in the cell inner membrane. The catalysed reaction is L-serine(in) + Na(+)(in) = L-serine(out) + Na(+)(out). The enzyme catalyses L-threonine(in) + Na(+)(in) = L-threonine(out) + Na(+)(out). Functionally, involved in the import of serine and threonine into the cell, with the concomitant import of sodium (symport system). In Haemophilus ducreyi (strain 35000HP / ATCC 700724), this protein is Serine/threonine transporter SstT.